The chain runs to 766 residues: Flocculation suppression protein (766 aa).

Disordered regions lie at residues 1–52 (MSEE…HGSK), 129–181 (HDHS…PTKI), 203–247 (KRRA…SSNS), 547–619 (KPVP…SISG), and 657–766 (SVTP…KVKM). Low complexity-rich tracts occupy residues 8 to 19 (SAPAPASTPAPA) and 134 to 147 (NDAN…TNDD). The DNA-binding element occupies 64 to 186 (IFIHKLYQIL…NPTKIWEFKH (123 aa)). Positions 171–181 (QEKEKSNPTKI) are enriched in basic and acidic residues. Residues 208 to 224 (SRNNSSINSRKNSSNQN) show a composition bias toward low complexity. Ser-220 bears the Phosphoserine mark. Residues 236–247 (SSIQDPSTSSNS) are compositionally biased toward polar residues. Ser-556 carries the post-translational modification Phosphoserine. Residues 679 to 699 (AVSSNLINSPMNVEHSSSLSQ) show a composition bias toward polar residues. The span at 708 to 719 (LPQPSLPTTSTT) shows a compositional bias: low complexity. Ser-733 is modified (phosphoserine). The span at 738–750 (LLNQEDSSTSSAD) shows a compositional bias: polar residues.

In the N-terminal section; belongs to the HSF family.

The protein localises to the nucleus. In terms of biological role, involved in cell surface assembly and regulation of the gene related to flocculation (asexual cell aggregation). Mutations in SFL1 causes constitutive cell aggregation. The protein is Flocculation suppression protein (SFL1) of Saccharomyces cerevisiae (strain ATCC 204508 / S288c) (Baker's yeast).